The sequence spans 365 residues: Outer membrane porin protein LC (365 aa).

The first 23 residues, 1–23 (MKKLTVAISAVAASVLMAMSAQA), serve as a signal peptide directing secretion.

This sequence belongs to the Gram-negative porin family. In terms of assembly, homotrimer.

It is found in the host cell outer membrane. Its function is as follows. Forms pores that allow passive diffusion of small molecules across the host cell outer membrane. The polypeptide is Outer membrane porin protein LC (LC) (Enterobacteria phage PA-2 (Bacteriophage PA-2)).